Consider the following 501-residue polypeptide: Aspartyl/glutamyl-tRNA(Asn/Gln) amidotransferase subunit B (501 aa).

This sequence belongs to the GatB/GatE family. GatB subfamily. Heterotrimer of A, B and C subunits.

The enzyme catalyses L-glutamyl-tRNA(Gln) + L-glutamine + ATP + H2O = L-glutaminyl-tRNA(Gln) + L-glutamate + ADP + phosphate + H(+). It catalyses the reaction L-aspartyl-tRNA(Asn) + L-glutamine + ATP + H2O = L-asparaginyl-tRNA(Asn) + L-glutamate + ADP + phosphate + 2 H(+). In terms of biological role, allows the formation of correctly charged Asn-tRNA(Asn) or Gln-tRNA(Gln) through the transamidation of misacylated Asp-tRNA(Asn) or Glu-tRNA(Gln) in organisms which lack either or both of asparaginyl-tRNA or glutaminyl-tRNA synthetases. The reaction takes place in the presence of glutamine and ATP through an activated phospho-Asp-tRNA(Asn) or phospho-Glu-tRNA(Gln). The polypeptide is Aspartyl/glutamyl-tRNA(Asn/Gln) amidotransferase subunit B (Agrobacterium fabrum (strain C58 / ATCC 33970) (Agrobacterium tumefaciens (strain C58))).